A 130-amino-acid chain; its full sequence is Large ribosomal subunit protein bL12 (130 aa).

This sequence belongs to the bacterial ribosomal protein bL12 family. As to quaternary structure, homodimer. Part of the ribosomal stalk of the 50S ribosomal subunit. Forms a multimeric L10(L12)X complex, where L10 forms an elongated spine to which 2 to 4 L12 dimers bind in a sequential fashion. Binds GTP-bound translation factors.

Its function is as follows. Forms part of the ribosomal stalk which helps the ribosome interact with GTP-bound translation factors. Is thus essential for accurate translation. This chain is Large ribosomal subunit protein bL12, found in Synechococcus sp. (strain WH7803).